The chain runs to 176 residues: MIRTIQDLLNERVAIGKIVNTHGLKGEVKFFPYTNSEEIVKNLSSVVLYNSEKKAFYNLTVESVRRMNKLFLIRFKSIDTIEAAERIKGCEVFIKYEELPKLSEDEYYFYEILDCDVFYESGENVGKVVDIIETGSNDVLVVRKKKKETLIPMTKDCIVEIDKGAKKIIAKEMEWI.

The 73-residue stretch at 104–176 folds into the PRC barrel domain; the sequence is EDEYYFYEIL…KIIAKEMEWI (73 aa).

It belongs to the RimM family. As to quaternary structure, binds ribosomal protein uS19.

The protein resides in the cytoplasm. In terms of biological role, an accessory protein needed during the final step in the assembly of 30S ribosomal subunit, possibly for assembly of the head region. Essential for efficient processing of 16S rRNA. May be needed both before and after RbfA during the maturation of 16S rRNA. It has affinity for free ribosomal 30S subunits but not for 70S ribosomes. The sequence is that of Ribosome maturation factor RimM from Thermotoga maritima (strain ATCC 43589 / DSM 3109 / JCM 10099 / NBRC 100826 / MSB8).